Consider the following 484-residue polypeptide: Acid alpha-amylase (484 aa).

N-linked (GlcNAc...) asparagine glycosylation is present at Asn-24. A disulfide bond links Cys-30 and Cys-38. A substrate-binding site is contributed by Trp-83. Asp-121 lines the Ca(2+) pocket. Position 122 (His-122) interacts with substrate. An intrachain disulfide couples Cys-150 to Cys-164. The N-linked (GlcNAc...) asparagine glycan is linked to Asn-157. Ca(2+) contacts are provided by Glu-162 and Asp-175. Asn-197 is a glycosylation site (N-linked (GlcNAc...) asparagine). Arg-204 contacts substrate. Ca(2+)-binding residues include Asp-206, Glu-210, and Glu-230. The active-site Nucleophile is the Asp-206. A substrate-binding site is contributed by 209 to 210 (LE). The active-site Proton donor is the Glu-230. Gly-234 is a substrate binding site. Cysteines 240 and 283 form a disulfide. Residues Asp-297 and Arg-344 each contribute to the substrate site. An intrachain disulfide couples Cys-440 to Cys-475.

This sequence belongs to the glycosyl hydrolase 13 family. In terms of assembly, monomer. It depends on Ca(2+) as a cofactor.

Its subcellular location is the secreted. It catalyses the reaction Endohydrolysis of (1-&gt;4)-alpha-D-glucosidic linkages in polysaccharides containing three or more (1-&gt;4)-alpha-linked D-glucose units.. The protein is Acid alpha-amylase of Aspergillus niger.